Reading from the N-terminus, the 884-residue chain is Alanine--tRNA ligase (884 aa).

Zn(2+) is bound by residues histidine 565, histidine 569, cysteine 672, and histidine 676.

It belongs to the class-II aminoacyl-tRNA synthetase family. Zn(2+) serves as cofactor.

Its subcellular location is the cytoplasm. It catalyses the reaction tRNA(Ala) + L-alanine + ATP = L-alanyl-tRNA(Ala) + AMP + diphosphate. In terms of biological role, catalyzes the attachment of alanine to tRNA(Ala) in a two-step reaction: alanine is first activated by ATP to form Ala-AMP and then transferred to the acceptor end of tRNA(Ala). Also edits incorrectly charged Ser-tRNA(Ala) and Gly-tRNA(Ala) via its editing domain. This chain is Alanine--tRNA ligase, found in Sphingopyxis alaskensis (strain DSM 13593 / LMG 18877 / RB2256) (Sphingomonas alaskensis).